Here is a 123-residue protein sequence, read N- to C-terminus: Molluscan insulin-related peptide 1 (123 aa).

The signal sequence occupies residues 1–31 (MAGVRLVFTKAFMVTVLLTLLLNIGVKPAEG). Glutamine 32 carries the pyrrolidone carboxylic acid modification. Disulfide bonds link cysteine 48–cysteine 109, cysteine 60–cysteine 122, and cysteine 108–cysteine 113. The propeptide occupies 68-69 (MV). Glutamine 99 carries the pyrrolidone carboxylic acid modification.

The protein belongs to the insulin family. As to quaternary structure, heterodimer of a B chain and an A chain linked by two disulfide bonds. As to expression, expressed in the cerebral light-green cells which are giant neuroendocrines cells involved in the control of growth.

The protein resides in the cytoplasmic vesicle. The protein localises to the secretory vesicle. The protein is Molluscan insulin-related peptide 1 of Lymnaea stagnalis (Great pond snail).